The primary structure comprises 286 residues: Phosphate import ATP-binding protein PstB (286 aa).

Positions 1–27 (MEPKETLRQRWPGRGRTEETGAMKKSD) are disordered. Positions 15–27 (GRTEETGAMKKSD) are enriched in basic and acidic residues. The 249-residue stretch at 33 to 281 (MTVEHLNMYY…PDRKETEDYV (249 aa)) folds into the ABC transporter domain. Residue 65–72 (GPSGCGKS) participates in ATP binding.

It belongs to the ABC transporter superfamily. Phosphate importer (TC 3.A.1.7) family. As to quaternary structure, the complex is composed of two ATP-binding proteins (PstB), two transmembrane proteins (PstC and PstA) and a solute-binding protein (PstS).

Its subcellular location is the cell membrane. The enzyme catalyses phosphate(out) + ATP + H2O = ADP + 2 phosphate(in) + H(+). Part of the ABC transporter complex PstSACB involved in phosphate import. Responsible for energy coupling to the transport system. This Rubrobacter xylanophilus (strain DSM 9941 / JCM 11954 / NBRC 16129 / PRD-1) protein is Phosphate import ATP-binding protein PstB.